A 416-amino-acid chain; its full sequence is L-threonine dehydratase biosynthetic IlvA (416 aa).

Lys-51 carries the post-translational modification N6-(pyridoxal phosphate)lysine. Pyridoxal 5'-phosphate is bound by residues Asn-78, 184 to 188 (GGGGL), and Ser-309. One can recognise an ACT-like domain in the interval 333-407 (HYFVINFPQR…FDNRYVNLHG (75 aa)).

The protein belongs to the serine/threonine dehydratase family. In terms of assembly, homotetramer. It depends on pyridoxal 5'-phosphate as a cofactor.

It catalyses the reaction L-threonine = 2-oxobutanoate + NH4(+). It functions in the pathway amino-acid biosynthesis; L-isoleucine biosynthesis; 2-oxobutanoate from L-threonine: step 1/1. Functionally, catalyzes the anaerobic formation of alpha-ketobutyrate and ammonia from threonine in a two-step reaction. The first step involved a dehydration of threonine and a production of enamine intermediates (aminocrotonate), which tautomerizes to its imine form (iminobutyrate). Both intermediates are unstable and short-lived. The second step is the nonenzymatic hydrolysis of the enamine/imine intermediates to form 2-ketobutyrate and free ammonia. In the low water environment of the cell, the second step is accelerated by RidA. The sequence is that of L-threonine dehydratase biosynthetic IlvA (ilvA) from Lactococcus lactis subsp. lactis (strain IL1403) (Streptococcus lactis).